Reading from the N-terminus, the 292-residue chain is 2-(5''-triphosphoribosyl)-3'-dephosphocoenzyme-A synthase (292 aa).

Belongs to the CitG/MdcB family.

It carries out the reaction 3'-dephospho-CoA + ATP = 2'-(5''-triphospho-alpha-D-ribosyl)-3'-dephospho-CoA + adenine. Functionally, catalyzes the formation of 2-(5''-triphosphoribosyl)-3'-dephosphocoenzyme-A, the precursor of the prosthetic group of the holo-acyl carrier protein (gamma chain) of citrate lyase, from ATP and dephospho-CoA. The sequence is that of 2-(5''-triphosphoribosyl)-3'-dephosphocoenzyme-A synthase from Escherichia coli (strain UTI89 / UPEC).